A 571-amino-acid chain; its full sequence is Proline--tRNA ligase (571 aa).

This sequence belongs to the class-II aminoacyl-tRNA synthetase family. ProS type 1 subfamily. As to quaternary structure, homodimer.

The protein localises to the cytoplasm. It catalyses the reaction tRNA(Pro) + L-proline + ATP = L-prolyl-tRNA(Pro) + AMP + diphosphate. Functionally, catalyzes the attachment of proline to tRNA(Pro) in a two-step reaction: proline is first activated by ATP to form Pro-AMP and then transferred to the acceptor end of tRNA(Pro). As ProRS can inadvertently accommodate and process non-cognate amino acids such as alanine and cysteine, to avoid such errors it has two additional distinct editing activities against alanine. One activity is designated as 'pretransfer' editing and involves the tRNA(Pro)-independent hydrolysis of activated Ala-AMP. The other activity is designated 'posttransfer' editing and involves deacylation of mischarged Ala-tRNA(Pro). The misacylated Cys-tRNA(Pro) is not edited by ProRS. This Leuconostoc citreum (strain KM20) protein is Proline--tRNA ligase.